The primary structure comprises 212 residues: Cytidylate kinase (212 aa).

G9 to T17 serves as a coordination point for ATP.

It belongs to the cytidylate kinase family. Type 1 subfamily.

The protein resides in the cytoplasm. The catalysed reaction is CMP + ATP = CDP + ADP. It carries out the reaction dCMP + ATP = dCDP + ADP. The polypeptide is Cytidylate kinase (Sinorhizobium medicae (strain WSM419) (Ensifer medicae)).